A 200-amino-acid chain; its full sequence is Signal peptidase complex catalytic subunit SEC11 (200 aa).

Residues 1–15 (MFAELAPYLSNPRQT) are Cytoplasmic-facing. A helical; Signal-anchor for type II membrane protein membrane pass occupies residues 16-33 (LAQILNFALVLSTAFMGW). Topologically, residues 34 to 200 (KALSVYTNSS…MGVMVMLQRE (167 aa)) are lumenal. Residue Asn-41 is glycosylated (N-linked (GlcNAc...) asparagine). Active-site charge relay system residues include Ser-53 and His-92. Positions 101-131 (GDGGKKSQRRLEKEADKRSGPGLSSPISHQM) are disordered. Positions 103-119 (GGKKSQRRLEKEADKRS) are enriched in basic and acidic residues. Asp-142 acts as the Charge relay system in catalysis. The C-terminal short (CTS) helix stretch occupies residues 186–197 (VLLGIMGVMVML).

Belongs to the peptidase S26B family. Component of the signal peptidase complex (SPC) composed of a catalytic subunit SEC11 and three accessory subunits SPC1, SPC2 and SPC3. The complex induces a local thinning of the ER membrane which is used to measure the length of the signal peptide (SP) h-region of protein substrates. This ensures the selectivity of the complex towards h-regions shorter than 18-20 amino acids. SPC associates with the translocon complex.

Its subcellular location is the endoplasmic reticulum membrane. It catalyses the reaction Cleavage of hydrophobic, N-terminal signal or leader sequences from secreted and periplasmic proteins.. Functionally, catalytic component of the signal peptidase complex (SPC) which catalyzes the cleavage of N-terminal signal sequences from nascent proteins as they are translocated into the lumen of the endoplasmic reticulum. Specifically cleaves N-terminal signal peptides that contain a hydrophobic alpha-helix (h-region) shorter than 18-20 amino acids. In Arthroderma gypseum (strain ATCC MYA-4604 / CBS 118893) (Microsporum gypseum), this protein is Signal peptidase complex catalytic subunit SEC11 (SEC11).